The following is an 85-amino-acid chain: Toxin TdNa9 (85 aa).

An N-terminal signal peptide occupies residues 1–21 (MLKFAIAVALLLFIGLELREA). The 63-residue stretch at 22-84 (RDGYPQSKVN…YGDPGTKPCM (63 aa)) folds into the LCN-type CS-alpha/beta domain. Intrachain disulfides connect C33–C83, C37–C58, C43–C63, and C47–C65.

It belongs to the long (4 C-C) scorpion toxin superfamily. Sodium channel inhibitor family. Beta subfamily. As to expression, expressed by the venom gland.

The protein localises to the secreted. Its function is as follows. Alpha toxins bind voltage-independently at site-3 of sodium channels (Nav) and inhibit the inactivation of the activated channels, thereby blocking neuronal transmission. This toxin binds, in vitro, to sodium channels and inhibits the inactivation of the activated channels. Seems not toxic to mice, crickets and sweet-water shrimps. The polypeptide is Toxin TdNa9 (Tityus discrepans (Venezuelan scorpion)).